Here is a 336-residue protein sequence, read N- to C-terminus: Aspartate--ammonia ligase (336 aa).

It belongs to the class-II aminoacyl-tRNA synthetase family. AsnA subfamily.

Its subcellular location is the cytoplasm. It carries out the reaction L-aspartate + NH4(+) + ATP = L-asparagine + AMP + diphosphate + H(+). Its pathway is amino-acid biosynthesis; L-asparagine biosynthesis; L-asparagine from L-aspartate (ammonia route): step 1/1. This chain is Aspartate--ammonia ligase, found in Clostridium perfringens (strain SM101 / Type A).